Reading from the N-terminus, the 85-residue chain is Homeobox protein knotted-1-like 7 (85 aa).

The ELK domain maps to 1–21 (ELKNELKQGYKEKLVDIREEI). A DNA-binding region (homeobox; TALE-type) is located at residues 22–85 (MRKRRAGKLP…NQRKRNWHSN (64 aa)).

It belongs to the TALE/KNOX homeobox family. As to expression, expressed in all tissues examined. Highest expression in leaves.

The protein localises to the nucleus. This is Homeobox protein knotted-1-like 7 (KNOX7) from Zea mays (Maize).